The following is a 168-amino-acid chain: Cyclic pyranopterin monophosphate synthase (168 aa).

Residues 75–77 and 115–116 each bind substrate; these read MCH and ME. Residue Asp130 is part of the active site.

It belongs to the MoaC family. As to quaternary structure, homohexamer; trimer of dimers.

It carries out the reaction (8S)-3',8-cyclo-7,8-dihydroguanosine 5'-triphosphate = cyclic pyranopterin phosphate + diphosphate. It functions in the pathway cofactor biosynthesis; molybdopterin biosynthesis. Catalyzes the conversion of (8S)-3',8-cyclo-7,8-dihydroguanosine 5'-triphosphate to cyclic pyranopterin monophosphate (cPMP). This Bacillus licheniformis (strain ATCC 14580 / DSM 13 / JCM 2505 / CCUG 7422 / NBRC 12200 / NCIMB 9375 / NCTC 10341 / NRRL NRS-1264 / Gibson 46) protein is Cyclic pyranopterin monophosphate synthase.